A 290-amino-acid polypeptide reads, in one-letter code: Ribosomal protein L11 methyltransferase (290 aa).

Residues Thr-136, Gly-159, Asp-181, and Asn-228 each contribute to the S-adenosyl-L-methionine site.

The protein belongs to the methyltransferase superfamily. PrmA family.

The protein resides in the cytoplasm. The catalysed reaction is L-lysyl-[protein] + 3 S-adenosyl-L-methionine = N(6),N(6),N(6)-trimethyl-L-lysyl-[protein] + 3 S-adenosyl-L-homocysteine + 3 H(+). In terms of biological role, methylates ribosomal protein L11. This chain is Ribosomal protein L11 methyltransferase, found in Allorhizobium ampelinum (strain ATCC BAA-846 / DSM 112012 / S4) (Agrobacterium vitis (strain S4)).